Consider the following 228-residue polypeptide: 5'-methylthioadenosine/S-adenosylhomocysteine nucleosidase (228 aa).

Glu-11 functions as the Proton acceptor in the catalytic mechanism. Substrate is bound by residues Gly-77, Ile-151, and 172-173 (ME). Asp-196 (proton donor) is an active-site residue.

It belongs to the PNP/UDP phosphorylase family. MtnN subfamily.

The catalysed reaction is S-adenosyl-L-homocysteine + H2O = S-(5-deoxy-D-ribos-5-yl)-L-homocysteine + adenine. It carries out the reaction S-methyl-5'-thioadenosine + H2O = 5-(methylsulfanyl)-D-ribose + adenine. The enzyme catalyses 5'-deoxyadenosine + H2O = 5-deoxy-D-ribose + adenine. It functions in the pathway amino-acid biosynthesis; L-methionine biosynthesis via salvage pathway; S-methyl-5-thio-alpha-D-ribose 1-phosphate from S-methyl-5'-thioadenosine (hydrolase route): step 1/2. In terms of biological role, catalyzes the irreversible cleavage of the glycosidic bond in both 5'-methylthioadenosine (MTA) and S-adenosylhomocysteine (SAH/AdoHcy) to adenine and the corresponding thioribose, 5'-methylthioribose and S-ribosylhomocysteine, respectively. Also cleaves 5'-deoxyadenosine, a toxic by-product of radical S-adenosylmethionine (SAM) enzymes, into 5-deoxyribose and adenine. This chain is 5'-methylthioadenosine/S-adenosylhomocysteine nucleosidase, found in Staphylococcus aureus (strain MRSA252).